A 475-amino-acid polypeptide reads, in one-letter code: Tubulin gamma chain (475 aa).

142–148 (AGGTGSG) is a binding site for GTP. Positions 455–475 (GKQVSGEGNTSGTVDSRVGAS) are disordered.

It belongs to the tubulin family.

It is found in the cytoplasm. The protein localises to the cytoskeleton. It localises to the microtubule organizing center. Functionally, tubulin is the major constituent of microtubules. The gamma chain is found at microtubule organizing centers (MTOC) such as the spindle poles, suggesting that it is involved in the minus-end nucleation of microtubule assembly. This is Tubulin gamma chain (TUBG1) from Physcomitrium patens (Spreading-leaved earth moss).